A 232-amino-acid chain; its full sequence is Large ribosomal subunit protein uL1 (232 aa).

This sequence belongs to the universal ribosomal protein uL1 family. In terms of assembly, part of the 50S ribosomal subunit.

Binds directly to 23S rRNA. The L1 stalk is quite mobile in the ribosome, and is involved in E site tRNA release. Its function is as follows. Protein L1 is also a translational repressor protein, it controls the translation of the L11 operon by binding to its mRNA. In Xylella fastidiosa (strain 9a5c), this protein is Large ribosomal subunit protein uL1.